Consider the following 142-residue polypeptide: Putative pre-16S rRNA nuclease (142 aa).

Belongs to the YqgF nuclease family.

It localises to the cytoplasm. In terms of biological role, could be a nuclease involved in processing of the 5'-end of pre-16S rRNA. This Staphylococcus carnosus (strain TM300) protein is Putative pre-16S rRNA nuclease.